Consider the following 608-residue polypeptide: Aspartate--tRNA(Asp/Asn) ligase (608 aa).

E175 provides a ligand contact to L-aspartate. The aspartate stretch occupies residues 199 to 202; sequence QLFK. An L-aspartate-binding site is contributed by R221. ATP contacts are provided by residues 221-223 and Q230; that span reads RDE. Residue H453 coordinates L-aspartate. An ATP-binding site is contributed by E487. R494 provides a ligand contact to L-aspartate. 539–542 contributes to the ATP binding site; it reads GWDR. Positions 566 to 608 are disordered; it reads IDPLTDAPAAITPQQRKEAGIDAKPKPKAEAQAEAQAEESAEK. The span at 580 to 596 shows a compositional bias: basic and acidic residues; the sequence is QRKEAGIDAKPKPKAEA.

Belongs to the class-II aminoacyl-tRNA synthetase family. Type 1 subfamily. In terms of assembly, homodimer.

It localises to the cytoplasm. The catalysed reaction is tRNA(Asx) + L-aspartate + ATP = L-aspartyl-tRNA(Asx) + AMP + diphosphate. Its function is as follows. Aspartyl-tRNA synthetase with relaxed tRNA specificity since it is able to aspartylate not only its cognate tRNA(Asp) but also tRNA(Asn). Reaction proceeds in two steps: L-aspartate is first activated by ATP to form Asp-AMP and then transferred to the acceptor end of tRNA(Asp/Asn). This Corynebacterium glutamicum (strain ATCC 13032 / DSM 20300 / JCM 1318 / BCRC 11384 / CCUG 27702 / LMG 3730 / NBRC 12168 / NCIMB 10025 / NRRL B-2784 / 534) protein is Aspartate--tRNA(Asp/Asn) ligase.